The sequence spans 377 residues: MSLVRLAHELPIEAPRTAWLDSIIKGDCVSALERLPDHSVDVIFADPPYNLQLGGDLHRPDQSMVSAVDDHWDQFESFQAYDAFTRAWLLACRRVLKPNGTIWVIGSYHNIFRVGTQLQDLGFWLLNDIVWRKTNPMPNFRGRRFQNAHETLIWASRDQKGKGYTFNYEAMKAANDDVQMRSDWLFPICTGSERLKDENGDKVHPTQKPEALLARIMMASSKPGDVILDPFFGSGTTGAVAKRLGRHFVGIEREQPYIDAATARINAVEPLGKAELTVMTGKRAEPRVAFTSVMEAGLLRPGTVLCDERRRFAAIVRADGTLTANGEAGSIHRIGARVQGFDACNGWTFWHFEENGVLKPIDALRKIIREQMAAAGA.

An RAMA domain is found at 271-373 (LGKAELTVMT…LRKIIREQMA (103 aa)).

The protein belongs to the N(4)/N(6)-methyltransferase family.

It catalyses the reaction a 2'-deoxyadenosine in DNA + S-adenosyl-L-methionine = an N(6)-methyl-2'-deoxyadenosine in DNA + S-adenosyl-L-homocysteine + H(+). Its function is as follows. A beta subtype methylase that recognizes the double-stranded sequence 5'-GANTC-3' and methylates A-2 on both strands. CcrM-mediated methylation has important cellular functions. Contributes to the accurate cell-cycle control of DNA replication and cellular morphology. The sequence is that of DNA methyltransferase CcrM (ccrM) from Brucella canis (strain ATCC 23365 / NCTC 10854 / RM-666).